Consider the following 435-residue polypeptide: Dual specificity mitogen-activated protein kinase kinase jkk-1 (435 aa).

Over residues 35 to 49 the composition is skewed to basic and acidic residues; it reads RDRRSTSVDQKHKEC. The tract at residues 35-90 is disordered; sequence RDRRSTSVDQKHKECSSTSSSPQHQRPNNIGYLTSPMERKFTPLSMKPSPSRRDTE. Polar residues predominate over residues 50–66; it reads SSTSSSPQHQRPNNIGY. Residues 122 to 385 form the Protein kinase domain; sequence IHIISLLGSG…YRQLMKHDFY (264 aa). ATP is bound by residues 128–136 and Lys-149; that span reads LGSGSCGVV. The active-site Proton acceptor is Asp-246.

It belongs to the protein kinase superfamily. STE Ser/Thr protein kinase family. MAP kinase kinase subfamily. Interacts with unc-16. Requires Mg(2+) as cofactor. As to expression, expressed in most neurons, including nerve ring, head ganglions, dorsal and ventral nerve cords and tail ganglions.

The protein resides in the cytoplasm. It is found in the perikaryon. The protein localises to the cell projection. It localises to the axon. The enzyme catalyses L-seryl-[protein] + ATP = O-phospho-L-seryl-[protein] + ADP + H(+). It catalyses the reaction L-threonyl-[protein] + ATP = O-phospho-L-threonyl-[protein] + ADP + H(+). The catalysed reaction is L-tyrosyl-[protein] + ATP = O-phospho-L-tyrosyl-[protein] + ADP + H(+). Dual specificity protein kinase which acts as an essential component of the JNK signal transduction pathway. May phosphorylate jnk-1. Plays a role in coordinating locomotion via D-type GABAergic motoneurons and in regulating synaptic vesicle transport downstream of adapter protein unc-16 and probably by activating jnk-1. Positively regulates lifespan. Upon environmental stress such as heat stress regulates daf-16 nuclear translocation probably by activating jnk-1. Regulates germline cell apoptosis in response to heavy metals such as Cu(2+) and to arsenite. The polypeptide is Dual specificity mitogen-activated protein kinase kinase jkk-1 (Caenorhabditis elegans).